A 599-amino-acid polypeptide reads, in one-letter code: Aspartate--tRNA(Asp/Asn) ligase (599 aa).

E172 contributes to the L-aspartate binding site. The tract at residues 196–199 (QLFK) is aspartate. R218 contributes to the L-aspartate binding site. ATP is bound by residues 218 to 220 (RDE) and Q227. H451 lines the L-aspartate pocket. Residue E485 coordinates ATP. R492 lines the L-aspartate pocket. Residue 537 to 540 (GLDR) coordinates ATP.

It belongs to the class-II aminoacyl-tRNA synthetase family. Type 1 subfamily. In terms of assembly, homodimer.

The protein localises to the cytoplasm. It catalyses the reaction tRNA(Asx) + L-aspartate + ATP = L-aspartyl-tRNA(Asx) + AMP + diphosphate. In terms of biological role, aspartyl-tRNA synthetase with relaxed tRNA specificity since it is able to aspartylate not only its cognate tRNA(Asp) but also tRNA(Asn). Reaction proceeds in two steps: L-aspartate is first activated by ATP to form Asp-AMP and then transferred to the acceptor end of tRNA(Asp/Asn). This chain is Aspartate--tRNA(Asp/Asn) ligase, found in Aromatoleum aromaticum (strain DSM 19018 / LMG 30748 / EbN1) (Azoarcus sp. (strain EbN1)).